The following is an 855-amino-acid chain: DNA mismatch repair protein MutS (855 aa).

613–620 (GPNMGGKS) contacts ATP. The segment at 796–816 (TTSLPHEMPSQQSGKPASPMQ) is disordered.

This sequence belongs to the DNA mismatch repair MutS family.

Its function is as follows. This protein is involved in the repair of mismatches in DNA. It is possible that it carries out the mismatch recognition step. This protein has a weak ATPase activity. This chain is DNA mismatch repair protein MutS, found in Pseudomonas aeruginosa (strain LESB58).